Here is a 209-residue protein sequence, read N- to C-terminus: Imidazoleglycerol-phosphate dehydratase (209 aa).

Belongs to the imidazoleglycerol-phosphate dehydratase family.

Its subcellular location is the cytoplasm. It carries out the reaction D-erythro-1-(imidazol-4-yl)glycerol 3-phosphate = 3-(imidazol-4-yl)-2-oxopropyl phosphate + H2O. The protein operates within amino-acid biosynthesis; L-histidine biosynthesis; L-histidine from 5-phospho-alpha-D-ribose 1-diphosphate: step 6/9. This is Imidazoleglycerol-phosphate dehydratase from Paracidovorax citrulli (strain AAC00-1) (Acidovorax citrulli).